Consider the following 338-residue polypeptide: Phenylalanine--tRNA ligase alpha subunit (338 aa).

Position 253 (E253) interacts with Mg(2+).

This sequence belongs to the class-II aminoacyl-tRNA synthetase family. Phe-tRNA synthetase alpha subunit type 1 subfamily. As to quaternary structure, tetramer of two alpha and two beta subunits. Mg(2+) serves as cofactor.

The protein localises to the cytoplasm. The catalysed reaction is tRNA(Phe) + L-phenylalanine + ATP = L-phenylalanyl-tRNA(Phe) + AMP + diphosphate + H(+). The protein is Phenylalanine--tRNA ligase alpha subunit of Pelobacter propionicus (strain DSM 2379 / NBRC 103807 / OttBd1).